Here is a 202-residue protein sequence, read N- to C-terminus: Putative 3-methyladenine DNA glycosylase (202 aa).

It belongs to the DNA glycosylase MPG family.

In Clostridium botulinum (strain Alaska E43 / Type E3), this protein is Putative 3-methyladenine DNA glycosylase.